The primary structure comprises 569 residues: Spermatogenesis-associated protein 16 (569 aa).

A compositionally biased stretch (basic and acidic residues) spans 67–92 (KGIKEKQSNDLEKAAFKRKAEGEEKP). Residues 67-96 (KGIKEKQSNDLEKAAFKRKAEGEEKPTRKK) are disordered.

This sequence belongs to the SPATA16 family. In terms of tissue distribution, expressed in testis.

The protein localises to the golgi apparatus. The protein resides in the cytoplasmic vesicle. It is found in the secretory vesicle. Its subcellular location is the acrosome. Its function is as follows. Essential for spermiogenesis and male fertility. Involved in the formation of sperm acrosome during spermatogenesis. This is Spermatogenesis-associated protein 16 (SPATA16) from Homo sapiens (Human).